Consider the following 255-residue polypeptide: Hydroxyacylglutathione hydrolase (255 aa).

Positions 53, 55, 57, 58, 110, 127, and 165 each coordinate Zn(2+).

Belongs to the metallo-beta-lactamase superfamily. Glyoxalase II family. As to quaternary structure, monomer. Zn(2+) serves as cofactor.

The catalysed reaction is an S-(2-hydroxyacyl)glutathione + H2O = a 2-hydroxy carboxylate + glutathione + H(+). Its pathway is secondary metabolite metabolism; methylglyoxal degradation; (R)-lactate from methylglyoxal: step 2/2. Its function is as follows. Thiolesterase that catalyzes the hydrolysis of S-D-lactoyl-glutathione to form glutathione and D-lactic acid. This Xanthomonas euvesicatoria pv. vesicatoria (strain 85-10) (Xanthomonas campestris pv. vesicatoria) protein is Hydroxyacylglutathione hydrolase.